A 437-amino-acid chain; its full sequence is Serine--tRNA ligase (437 aa).

Position 244 to 246 (244 to 246 (TAE)) interacts with L-serine. 275-277 (RSE) contributes to the ATP binding site. Glu-298 serves as a coordination point for L-serine. ATP is bound at residue 362 to 365 (EISS). An L-serine-binding site is contributed by Ser-397.

The protein belongs to the class-II aminoacyl-tRNA synthetase family. Type-1 seryl-tRNA synthetase subfamily. Homodimer. The tRNA molecule binds across the dimer.

The protein localises to the cytoplasm. It carries out the reaction tRNA(Ser) + L-serine + ATP = L-seryl-tRNA(Ser) + AMP + diphosphate + H(+). It catalyses the reaction tRNA(Sec) + L-serine + ATP = L-seryl-tRNA(Sec) + AMP + diphosphate + H(+). Its pathway is aminoacyl-tRNA biosynthesis; selenocysteinyl-tRNA(Sec) biosynthesis; L-seryl-tRNA(Sec) from L-serine and tRNA(Sec): step 1/1. Functionally, catalyzes the attachment of serine to tRNA(Ser). Is also able to aminoacylate tRNA(Sec) with serine, to form the misacylated tRNA L-seryl-tRNA(Sec), which will be further converted into selenocysteinyl-tRNA(Sec). This chain is Serine--tRNA ligase, found in Nitrosomonas europaea (strain ATCC 19718 / CIP 103999 / KCTC 2705 / NBRC 14298).